Consider the following 153-residue polypeptide: uncharacterized protein (153 aa).

2 disordered regions span residues 24–87 (PEDS…DRPL) and 101–153 (GDPR…RIPS). Positions 27–37 (SSCPCPRLPLS) are enriched in low complexity. Over residues 143 to 153 (TRKESSCRIPS) the composition is skewed to basic and acidic residues.

This is an uncharacterized protein from Dryophytes versicolor (chameleon treefrog).